The sequence spans 350 residues: MAPSPAPLLSLSLPELTDWVQTTGQPAYRGKQIHQWLYQKGARSLTAMTDLPKVWREKNVHYPIGRSVIDHCAVAPDHTRKYLLRLADGLIIETVGIPSSKRLTVCVSSQVGCAMDCNFCATGKGGFIRNLESHEIVDQVLTVQEEFHERVSNVVFMGMGEPLLNLPQVVKAVECLNQVVGIGQRALTISTVGLPGKIRQLADRHLQVTFAVSLHAPNQTLRQSLIPSARHYPLEQLLADCRAYVETTGRRVTFEYVLLAGVNDQPVHAEELAQKLRGFQTHVNLIPYNPISEVDYQRPTEAQINQFAQVLSDHRIAVSVRYSRGVQADAACGQLRASRKEELAELTPMA.

Glutamate 93 serves as the catalytic Proton acceptor. The 229-residue stretch at 99 to 327 folds into the Radical SAM core domain; it reads SSKRLTVCVS…VSVRYSRGVQ (229 aa). Residues cysteine 106 and cysteine 332 are joined by a disulfide bond. 3 residues coordinate [4Fe-4S] cluster: cysteine 113, cysteine 117, and cysteine 120. S-adenosyl-L-methionine is bound by residues 160-161, serine 190, 213-215, and asparagine 289; these read GE and SLH. Cysteine 332 (S-methylcysteine intermediate) is an active-site residue.

The protein belongs to the radical SAM superfamily. RlmN family. The cofactor is [4Fe-4S] cluster.

Its subcellular location is the cytoplasm. The catalysed reaction is adenosine(2503) in 23S rRNA + 2 reduced [2Fe-2S]-[ferredoxin] + 2 S-adenosyl-L-methionine = 2-methyladenosine(2503) in 23S rRNA + 5'-deoxyadenosine + L-methionine + 2 oxidized [2Fe-2S]-[ferredoxin] + S-adenosyl-L-homocysteine. It carries out the reaction adenosine(37) in tRNA + 2 reduced [2Fe-2S]-[ferredoxin] + 2 S-adenosyl-L-methionine = 2-methyladenosine(37) in tRNA + 5'-deoxyadenosine + L-methionine + 2 oxidized [2Fe-2S]-[ferredoxin] + S-adenosyl-L-homocysteine. Its function is as follows. Specifically methylates position 2 of adenine 2503 in 23S rRNA and position 2 of adenine 37 in tRNAs. The sequence is that of Probable dual-specificity RNA methyltransferase RlmN from Synechocystis sp. (strain ATCC 27184 / PCC 6803 / Kazusa).